Here is a 360-residue protein sequence, read N- to C-terminus: Photosystem II protein D1 (360 aa).

A run of 3 helical transmembrane segments spans residues 29-46, 118-133, and 142-156; these read YIGW…TATT, HFLL…EWEL, and WIFV…AASA. H118 contributes to the chlorophyll a binding site. Residue Y126 coordinates pheophytin a. Residues D170 and E189 each contribute to the [CaMn4O5] cluster site. The helical transmembrane segment at 197–218 threads the bilayer; the sequence is FHMAGVAGVFGGSLFSAMHGSL. Residue H198 participates in chlorophyll a binding. A quinone contacts are provided by residues H215 and 264-265; that span reads SF. H215 contacts Fe cation. H272 contacts Fe cation. Residues 274–288 form a helical membrane-spanning segment; sequence FLAAWPVVRIWLTAL. H332, E333, D342, and A344 together coordinate [CaMn4O5] cluster. The propeptide occupies 345–360; that stretch reads AGEVLPVAVSAPAVHA.

The protein belongs to the reaction center PufL/M/PsbA/D family. PSII is composed of 1 copy each of membrane proteins PsbA, PsbB, PsbC, PsbD, PsbE, PsbF, PsbH, PsbI, PsbJ, PsbK, PsbL, PsbM, PsbT, PsbX, PsbY, PsbZ, Psb30/Ycf12, at least 3 peripheral proteins of the oxygen-evolving complex and a large number of cofactors. It forms dimeric complexes. It depends on The D1/D2 heterodimer binds P680, chlorophylls that are the primary electron donor of PSII, and subsequent electron acceptors. It shares a non-heme iron and each subunit binds pheophytin, quinone, additional chlorophylls, carotenoids and lipids. D1 provides most of the ligands for the Mn4-Ca-O5 cluster of the oxygen-evolving complex (OEC). There is also a Cl(-1) ion associated with D1 and D2, which is required for oxygen evolution. The PSII complex binds additional chlorophylls, carotenoids and specific lipids. as a cofactor. Tyr-161 forms a radical intermediate that is referred to as redox-active TyrZ, YZ or Y-Z. Post-translationally, C-terminally processed by CTPA; processing is essential to allow assembly of the oxygen-evolving complex and thus photosynthetic growth.

It is found in the plastid. Its subcellular location is the chloroplast thylakoid membrane. The enzyme catalyses 2 a plastoquinone + 4 hnu + 2 H2O = 2 a plastoquinol + O2. Its function is as follows. Photosystem II (PSII) is a light-driven water:plastoquinone oxidoreductase that uses light energy to abstract electrons from H(2)O, generating O(2) and a proton gradient subsequently used for ATP formation. It consists of a core antenna complex that captures photons, and an electron transfer chain that converts photonic excitation into a charge separation. The D1/D2 (PsbA/PsbD) reaction center heterodimer binds P680, the primary electron donor of PSII as well as several subsequent electron acceptors. The polypeptide is Photosystem II protein D1 (Bumilleriopsis filiformis (Yellow-green alga)).